Here is a 1028-residue protein sequence, read N- to C-terminus: Collagen alpha-1(VI) chain (1028 aa).

An N-terminal signal peptide occupies residues 1 to 19 (MRAARALLPLLLQACWTAA). The tract at residues 20 to 256 (QDEPETPRAV…CCSFECQPAR (237 aa)) is N-terminal globular domain. One can recognise a VWFA 1 domain in the interval 37-235 (DLFFVLDTSE…EAISQTIDTI (199 aa)). Asn212 carries an N-linked (GlcNAc...) asparagine glycan. Residues 254–590 (PARGPPGLRG…GPPGHQGPPG (337 aa)) form a disordered region. The interval 257-592 (GPPGLRGDPG…PGHQGPPGPD (336 aa)) is triple-helical region. The Cell attachment site motif lies at 262 to 264 (RGD). 2 stretches are compositionally biased toward basic and acidic residues: residues 268-285 (EGER…EAGD) and 301-334 (KGEK…DGVK). Over residues 384-394 (RPGSSGPSGDE) the composition is skewed to low complexity. The Cell attachment site signature appears at 442–444 (RGD). Residues 457–471 (EGPVGVPGDPGEAGP) are compositionally biased toward low complexity. A Cell attachment site motif is present at residues 478–480 (RGD). Residues 483–493 (PPGSEGARGAP) show a composition bias toward low complexity. 2 N-linked (GlcNAc...) asparagine glycosylation sites follow: Asn516 and Asn537. A compositionally biased stretch (acidic residues) spans 550–560 (GEAGDPGDDNN). Residues 579-590 (PQGPPGHQGPPG) show a composition bias toward pro residues. Residues 593–1028 (ECEILDIIMK…QTVSRKVALG (436 aa)) form a C-terminal globular domain region. VWFA domains are found at residues 615–805 (DLLF…LKNV) and 829–1021 (DITI…HQTV). 2 N-linked (GlcNAc...) asparagine glycosylation sites follow: Asn804 and Asn896.

It belongs to the type VI collagen family. In terms of assembly, trimers composed of three different chains: alpha-1(VI), alpha-2(VI), and alpha-3(VI) or alpha-5(VI) or alpha-6(VI). Post-translationally, prolines at the third position of the tripeptide repeating unit (G-X-Y) are hydroxylated in some or all of the chains.

The protein resides in the secreted. It is found in the extracellular space. It localises to the extracellular matrix. In terms of biological role, collagen VI acts as a cell-binding protein. This chain is Collagen alpha-1(VI) chain (COL6A1), found in Homo sapiens (Human).